We begin with the raw amino-acid sequence, 448 residues long: Methionine aminopeptidase 2-1 (448 aa).

The segment at Met1 to Arg83 is disordered. The segment covering Glu32 to Ala48 has biased composition (acidic residues). Residues Ala59–Asp73 show a composition bias toward basic residues. His198 provides a ligand contact to substrate. Positions 218, 229, and 298 each coordinate a divalent metal cation. His306 is a binding site for substrate. Residues Glu334 and Glu429 each coordinate a divalent metal cation.

This sequence belongs to the peptidase M24A family. Methionine aminopeptidase eukaryotic type 2 subfamily. It depends on Co(2+) as a cofactor. Requires Zn(2+) as cofactor. Mn(2+) is required as a cofactor. The cofactor is Fe(2+).

The protein localises to the cytoplasm. It catalyses the reaction Release of N-terminal amino acids, preferentially methionine, from peptides and arylamides.. Cotranslationally removes the N-terminal methionine from nascent proteins. The N-terminal methionine is often cleaved when the second residue in the primary sequence is small and uncharged (Met-Ala-, Cys, Gly, Pro, Ser, Thr, or Val). This is Methionine aminopeptidase 2-1 from Ajellomyces capsulatus (strain G186AR / H82 / ATCC MYA-2454 / RMSCC 2432) (Darling's disease fungus).